The chain runs to 490 residues: Cardiolipin synthase A (490 aa).

Transmembrane regions (helical) follow at residues 20–40 and 49–69; these read LGLLLVGIQVLGFVAAIHAVL and IAWATSLVFMPYLTLLPYLVF. PLD phosphodiesterase domains are found at residues 229–256 and 403–430; these read VNFRNHRKVVVVDGECGFVGGHNVGVEY and QPGFLHQKVVLVDRDTAAVGSANLDNRS. Residues His-234, Lys-236, Asp-241, His-408, Lys-410, and Asp-415 contribute to the active site.

Belongs to the phospholipase D family. Cardiolipin synthase subfamily. ClsA sub-subfamily.

Its subcellular location is the cell inner membrane. The catalysed reaction is 2 a 1,2-diacyl-sn-glycero-3-phospho-(1'-sn-glycerol) = a cardiolipin + glycerol. In terms of biological role, catalyzes the reversible phosphatidyl group transfer from one phosphatidylglycerol molecule to another to form cardiolipin (CL) (diphosphatidylglycerol) and glycerol. The sequence is that of Cardiolipin synthase A from Pseudomonas aeruginosa (strain LESB58).